A 338-amino-acid chain; its full sequence is Anthranilate phosphoribosyltransferase (338 aa).

5-phospho-alpha-D-ribose 1-diphosphate-binding positions include G81, 84–85 (GD), T89, 91–94 (NIST), 109–117 (KHGNRNLSS), and A121. G81 is a binding site for anthranilate. S93 serves as a coordination point for Mg(2+). Residue N112 coordinates anthranilate. R167 contributes to the anthranilate binding site. Residues D226 and E227 each contribute to the Mg(2+) site.

Belongs to the anthranilate phosphoribosyltransferase family. As to quaternary structure, homodimer. Mg(2+) is required as a cofactor.

It carries out the reaction N-(5-phospho-beta-D-ribosyl)anthranilate + diphosphate = 5-phospho-alpha-D-ribose 1-diphosphate + anthranilate. Its pathway is amino-acid biosynthesis; L-tryptophan biosynthesis; L-tryptophan from chorismate: step 2/5. Functionally, catalyzes the transfer of the phosphoribosyl group of 5-phosphorylribose-1-pyrophosphate (PRPP) to anthranilate to yield N-(5'-phosphoribosyl)-anthranilate (PRA). In Cereibacter sphaeroides (strain ATCC 17029 / ATH 2.4.9) (Rhodobacter sphaeroides), this protein is Anthranilate phosphoribosyltransferase.